Reading from the N-terminus, the 242-residue chain is NAD(P)H-quinone oxidoreductase subunit K (242 aa).

[4Fe-4S] cluster contacts are provided by C60, C61, C125, and C156.

It belongs to the complex I 20 kDa subunit family. In terms of assembly, NDH-1 can be composed of about 15 different subunits; different subcomplexes with different compositions have been identified which probably have different functions. [4Fe-4S] cluster serves as cofactor.

It is found in the cellular thylakoid membrane. It carries out the reaction a plastoquinone + NADH + (n+1) H(+)(in) = a plastoquinol + NAD(+) + n H(+)(out). The catalysed reaction is a plastoquinone + NADPH + (n+1) H(+)(in) = a plastoquinol + NADP(+) + n H(+)(out). Its function is as follows. NDH-1 shuttles electrons from an unknown electron donor, via FMN and iron-sulfur (Fe-S) centers, to quinones in the respiratory and/or the photosynthetic chain. The immediate electron acceptor for the enzyme in this species is believed to be plastoquinone. Couples the redox reaction to proton translocation, and thus conserves the redox energy in a proton gradient. Cyanobacterial NDH-1 also plays a role in inorganic carbon-concentration. This is NAD(P)H-quinone oxidoreductase subunit K from Prochlorococcus marinus (strain SARG / CCMP1375 / SS120).